The chain runs to 222 residues: Cytochrome b6 (222 aa).

A helical membrane pass occupies residues I39–F59. C42 is a binding site for heme c. Heme b is bound by residues H93 and H107. Transmembrane regions (helical) follow at residues A97–F117, L123–Y143, and L193–I213. Heme b contacts are provided by H194 and H209.

The protein belongs to the cytochrome b family. PetB subfamily. As to quaternary structure, the 4 large subunits of the cytochrome b6-f complex are cytochrome b6, subunit IV (17 kDa polypeptide, PetD), cytochrome f and the Rieske protein, while the 4 small subunits are PetG, PetL, PetM and PetN. The complex functions as a dimer. It depends on heme b as a cofactor. The cofactor is heme c.

It localises to the cellular thylakoid membrane. Component of the cytochrome b6-f complex, which mediates electron transfer between photosystem II (PSII) and photosystem I (PSI), cyclic electron flow around PSI, and state transitions. This Trichodesmium erythraeum (strain IMS101) protein is Cytochrome b6.